The following is a 291-amino-acid chain: Polyamine aminopropyltransferase (291 aa).

The region spanning Pro5–Leu245 is the PABS domain. S-methyl-5'-thioadenosine is bound at residue Gln36. Residues His67 and Glu91 each contribute to the spermidine site. S-methyl-5'-thioadenosine-binding positions include Asp111 and Asp143 to Gly144. The active-site Proton acceptor is the Asp164.

Belongs to the spermidine/spermine synthase family. In terms of assembly, homodimer or homotetramer.

It localises to the cytoplasm. It catalyses the reaction S-adenosyl 3-(methylsulfanyl)propylamine + putrescine = S-methyl-5'-thioadenosine + spermidine + H(+). The protein operates within amine and polyamine biosynthesis; spermidine biosynthesis; spermidine from putrescine: step 1/1. Functionally, catalyzes the irreversible transfer of a propylamine group from the amino donor S-adenosylmethioninamine (decarboxy-AdoMet) to putrescine (1,4-diaminobutane) to yield spermidine. This Pyrobaculum islandicum (strain DSM 4184 / JCM 9189 / GEO3) protein is Polyamine aminopropyltransferase.